Here is a 203-residue protein sequence, read N- to C-terminus: Peptidyl-tRNA hydrolase (203 aa).

A tRNA-binding site is contributed by Y18. The active-site Proton acceptor is the H23. Residues F69, N71, and N117 each coordinate tRNA.

The protein belongs to the PTH family. As to quaternary structure, monomer.

Its subcellular location is the cytoplasm. The enzyme catalyses an N-acyl-L-alpha-aminoacyl-tRNA + H2O = an N-acyl-L-amino acid + a tRNA + H(+). Its function is as follows. Hydrolyzes ribosome-free peptidyl-tRNAs (with 1 or more amino acids incorporated), which drop off the ribosome during protein synthesis, or as a result of ribosome stalling. Catalyzes the release of premature peptidyl moieties from peptidyl-tRNA molecules trapped in stalled 50S ribosomal subunits, and thus maintains levels of free tRNAs and 50S ribosomes. The chain is Peptidyl-tRNA hydrolase from Prochlorococcus marinus subsp. pastoris (strain CCMP1986 / NIES-2087 / MED4).